Reading from the N-terminus, the 351-residue chain is Photosystem II D2 protein (351 aa).

A helical membrane pass occupies residues 39–59 (CAFLALGGWLTGTTFVTSWYT). Residue H116 participates in chlorophyll a binding. Residues 123 to 139 (GFMLRQFEIARLVGIRP) form a helical membrane-spanning segment. Positions 128 and 141 each coordinate pheophytin a. The helical transmembrane segment at 151 to 164 (VFVSVFLMYPLGQS) threads the bilayer. H196 is a binding site for chlorophyll a. A helical transmembrane segment spans residues 206-226 (GALLCAIHGATVENTLFEDGE). The a plastoquinone site is built by H213 and F260. H213 is a Fe cation binding site. H267 contacts Fe cation. Residues 277-293 (GLWMSAVGIVGLALNLR) traverse the membrane as a helical segment.

It belongs to the reaction center PufL/M/PsbA/D family. PSII is composed of 1 copy each of membrane proteins PsbA, PsbB, PsbC, PsbD, PsbE, PsbF, PsbH, PsbI, PsbJ, PsbK, PsbL, PsbM, PsbT, PsbX, PsbY, PsbZ, Psb30/Ycf12, peripheral proteins PsbO, CyanoQ (PsbQ), PsbU, PsbV and a large number of cofactors. It forms dimeric complexes. It depends on The D1/D2 heterodimer binds P680, chlorophylls that are the primary electron donor of PSII, and subsequent electron acceptors. It shares a non-heme iron and each subunit binds pheophytin, quinone, additional chlorophylls, carotenoids and lipids. There is also a Cl(-1) ion associated with D1 and D2, which is required for oxygen evolution. The PSII complex binds additional chlorophylls, carotenoids and specific lipids. as a cofactor.

Its subcellular location is the cellular thylakoid membrane. It catalyses the reaction 2 a plastoquinone + 4 hnu + 2 H2O = 2 a plastoquinol + O2. Its function is as follows. Photosystem II (PSII) is a light-driven water:plastoquinone oxidoreductase that uses light energy to abstract electrons from H(2)O, generating O(2) and a proton gradient subsequently used for ATP formation. It consists of a core antenna complex that captures photons, and an electron transfer chain that converts photonic excitation into a charge separation. The D1/D2 (PsbA/PsbD) reaction center heterodimer binds P680, the primary electron donor of PSII as well as several subsequent electron acceptors. D2 is needed for assembly of a stable PSII complex. The polypeptide is Photosystem II D2 protein (Nostoc sp. (strain PCC 7120 / SAG 25.82 / UTEX 2576)).